The following is a 367-amino-acid chain: Peptide chain release factor 1 (367 aa).

Gln-243 is subject to N5-methylglutamine.

This sequence belongs to the prokaryotic/mitochondrial release factor family. Post-translationally, methylated by PrmC. Methylation increases the termination efficiency of RF1.

The protein localises to the cytoplasm. In terms of biological role, peptide chain release factor 1 directs the termination of translation in response to the peptide chain termination codons UAG and UAA. This Acidovorax sp. (strain JS42) protein is Peptide chain release factor 1.